An 809-amino-acid chain; its full sequence is AP-3 complex subunit beta (809 aa).

5 HEAT repeats span residues 37-76, 112-151, 153-186, 187-224, and 524-561; these read YYSQNINPQQLVTLLNSRNSREVRDAMKRIISIMASDDDS, DPNLTLLSINSLQKSLSDSNSELRCFALSALSDMKMSSLA, IILHTVKKLVTDPSAMVRGEVALAIIKLYRAGKN, DYHEELLDILKELMADTDPKVISCAVLAYKECYADHLE, and KICPDVLRRLIQNFSNEGPETRCQILVLSAKLLSYDID. Phosphoserine occurs at positions 693, 698, 724, and 726. 2 disordered regions span residues 708 to 739 and 763 to 809; these read FTSSSNAKLTGINDGDSNSISGKGNVNTFTSQ and PRKI…HLEL. Polar residues predominate over residues 722-739; sequence GDSNSISGKGNVNTFTSQ. Residues 772-791 show a composition bias toward acidic residues; sequence ESSDEDEDESEESSDDDEYS. Low complexity predominate over residues 792 to 809; that stretch reads DSSLGTSSSGTSSSHLEL.

The protein belongs to the adaptor complexes large subunit family. Adaptor protein complex 3 (AP-3) is a heterotetramer composed of 2 large adaptins (APL5 and APL6), a medium adaptin (APM3) and a small adaptin (APS3). Post-translationally, pyrophosphorylated by 5-diphosphoinositol pentakisphosphate (5-IP7). Serine pyrophosphorylation is achieved by Mg(2+)-dependent, but enzyme independent transfer of a beta-phosphate from a inositol pyrophosphate to a pre-phosphorylated serine residue.

The protein localises to the golgi apparatus. The protein resides in the cytoplasmic vesicle. Its subcellular location is the clathrin-coated vesicle membrane. Part of the AP-3 complex, an adaptor-related complex which is not clathrin-associated. The complex is associated with the Golgi region as well as more peripheral structures. It facilitates the budding of vesicles from the Golgi membrane and may be directly involved in trafficking to the vacuole. Required for the transport via the ALP pathway, which directs the transport of the cargo proteins PHO8 and VAM3 to the vacuole. The polypeptide is AP-3 complex subunit beta (APL6) (Saccharomyces cerevisiae (strain ATCC 204508 / S288c) (Baker's yeast)).